Here is a 580-residue protein sequence, read N- to C-terminus: DNA ligase 1 (580 aa).

Glu-245 is an ATP binding site. Lys-247 serves as the catalytic N6-AMP-lysine intermediate. 6 residues coordinate ATP: Arg-252, Arg-267, Glu-297, Phe-343, Arg-420, and Lys-426.

The protein belongs to the ATP-dependent DNA ligase family. Mg(2+) is required as a cofactor.

The catalysed reaction is ATP + (deoxyribonucleotide)n-3'-hydroxyl + 5'-phospho-(deoxyribonucleotide)m = (deoxyribonucleotide)n+m + AMP + diphosphate.. DNA ligase that seals nicks in double-stranded DNA during DNA replication, DNA recombination and DNA repair. The protein is DNA ligase 1 of Methanosarcina acetivorans (strain ATCC 35395 / DSM 2834 / JCM 12185 / C2A).